A 215-amino-acid chain; its full sequence is NADH-quinone oxidoreductase subunit C (215 aa).

This sequence belongs to the complex I 30 kDa subunit family. NDH-1 is composed of 14 different subunits. Subunits NuoB, C, D, E, F, and G constitute the peripheral sector of the complex.

The protein resides in the cell inner membrane. It carries out the reaction a quinone + NADH + 5 H(+)(in) = a quinol + NAD(+) + 4 H(+)(out). Functionally, NDH-1 shuttles electrons from NADH, via FMN and iron-sulfur (Fe-S) centers, to quinones in the respiratory chain. The immediate electron acceptor for the enzyme in this species is believed to be ubiquinone. Couples the redox reaction to proton translocation (for every two electrons transferred, four hydrogen ions are translocated across the cytoplasmic membrane), and thus conserves the redox energy in a proton gradient. The chain is NADH-quinone oxidoreductase subunit C from Francisella philomiragia subsp. philomiragia (strain ATCC 25017 / CCUG 19701 / FSC 153 / O#319-036).